The chain runs to 370 residues: Cyanuric acid amidohydrolase (370 aa).

The interval 1-106 (MRTTSVGVFK…TVFTRREVER (106 aa)) is RU A. Residues arginine 54 and 85-86 (SG) contribute to the substrate site. The interval 115 to 251 (RLSIGMAHTR…NVVIVLGNSA (137 aa)) is RU B. Lysine 165 is a catalytic residue. Substrate is bound by residues arginine 197 and 234 to 235 (SA). The active-site Nucleophile is the serine 234. Residues 257–370 (FEIGHAVMND…PVAVIARLSD (114 aa)) are RU C. A Mg(2+)-binding site is contributed by glutamate 302. Residues arginine 329 and 348-349 (SG) each bind substrate. Positions 351, 354, 355, 356, and 359 each coordinate Mg(2+).

The protein belongs to the cyclic amide hydrolase (CyAH) family. In terms of assembly, homotetramer.

The catalysed reaction is cyanurate + H2O = 1-carboxybiuret + H(+). It functions in the pathway xenobiotic degradation; atrazine degradation; biuret from cyanurate: step 1/1. With respect to regulation, inhibited by barbituric acid. Responsible for the hydrolysis of cyanuric acid, an intermediate formed during catabolism of s-triazine based compounds in herbicides such as atrazine and polymers such as melamine. Catalyzes the hydrolytic opening of the s-triazine ring of cyanuric acid (2,4,6-trihydroxy-s-triazine) to yield carbon dioxide and carboxybiuret, which spontaneously decarboxylates to biuret. In Bradyrhizobium diazoefficiens (strain JCM 10833 / BCRC 13528 / IAM 13628 / NBRC 14792 / USDA 110), this protein is Cyanuric acid amidohydrolase.